The following is a 322-amino-acid chain: Mas-related G-protein coupled receptor member B5 (322 aa).

Topologically, residues 1–34 (MGLTTPAWNINNTVVNGSNNTEHFSCVSKFNTLN) are extracellular. N11, N16, and N19 each carry an N-linked (GlcNAc...) asparagine glycan. A helical membrane pass occupies residues 35 to 55 (FLTVIIAMFGLAGNAIVLWLL). The Cytoplasmic portion of the chain corresponds to 56-70 (AFHLPRNAFSVYVCN). Residues 71–91 (LACADFLQLCTQILGSLECFL) form a helical membrane-spanning segment. Residues 92–98 (QLNRRHT) lie on the Extracellular side of the membrane. A helical membrane pass occupies residues 99–119 (FFLTVVFMFAYLAGLCMIAAI). Over 120-147 (SVERSLSVMWPIWYHCQRPRHTSSIMCA) the chain is Cytoplasmic. Residues 148–168 (LLWAFCLLLNFLLGEGCGLLF) traverse the membrane as a helical segment. The Extracellular portion of the chain corresponds to 169–172 (SDPK). A helical transmembrane segment spans residues 173 to 193 (YYFCITCALITTALIILLTVV). At 194–216 (PSVSSLALLVKMICGSHRIPVTR) the chain is on the cytoplasmic side. The helical transmembrane segment at 217 to 237 (FYVTIALTLVVFIFLGLPFGI) threads the bilayer. The Extracellular segment spans residues 238 to 260 (YSSFLIMFKEFQSIFSYHVLEVT). A helical transmembrane segment spans residues 261–281 (IFLSCVNSCANPIIYFLVGSI). Residues 282 to 322 (RQHRLQWQSLKLLLQRAMQDTPEEDSGERVPSQRSGELESV) lie on the Cytoplasmic side of the membrane. The disordered stretch occupies residues 302-322 (TPEEDSGERVPSQRSGELESV).

Belongs to the G-protein coupled receptor 1 family. Mas subfamily.

The protein resides in the membrane. In terms of biological role, orphan receptor. Probably involved in the function of nociceptive neurons. May regulate nociceptor function and/or development, including the sensation or modulation of pain. This Mus musculus (Mouse) protein is Mas-related G-protein coupled receptor member B5 (Mrgprb5).